A 141-amino-acid chain; its full sequence is Fluoride-specific ion channel FluC 1 (141 aa).

Transmembrane regions (helical) follow at residues 12-32 (LYAL…LVGV), 44-64 (WATL…AAIA), 79-99 (FVMT…LETF), and 107-127 (ALAA…AVWL). Na(+)-binding residues include G86 and T89.

It belongs to the fluoride channel Fluc/FEX (TC 1.A.43) family.

The protein resides in the cell inner membrane. It carries out the reaction fluoride(in) = fluoride(out). With respect to regulation, na(+) is not transported, but it plays an essential structural role and its presence is essential for fluoride channel function. In terms of biological role, fluoride-specific ion channel. Important for reducing fluoride concentration in the cell, thus reducing its toxicity. The polypeptide is Fluoride-specific ion channel FluC 1 (Rhodopseudomonas palustris (strain BisB18)).